The following is a 505-amino-acid chain: uncharacterized protein (505 aa).

The signal sequence occupies residues 1-22; the sequence is MAILKSALVGFICFLHFFIVNA. N-linked (GlcNAc...) asparagine glycans are attached at residues Asn25 and Asn114. The next 5 membrane-spanning stretches (helical) occupy residues 181-201, 216-236, 266-286, 291-311, and 318-338; these read LFLN…WSFI, ISGV…YFYF, FLLL…GSLL, ILAG…FISP, and VILF…LWIV. A glycan (N-linked (GlcNAc...) asparagine) is linked at Asn342. Transmembrane regions (helical) follow at residues 365–385 and 400–420; these read IVIC…AILI and LLWF…MLTI. Residue Asn454 is glycosylated (N-linked (GlcNAc...) asparagine).

Belongs to the LU7TM family.

Its subcellular location is the membrane. This is an uncharacterized protein from Schizosaccharomyces pombe (strain 972 / ATCC 24843) (Fission yeast).